The primary structure comprises 209 residues: MSHGHSHGGGCSCESEPSDGPERGLEYGLFRKIDLDKLQCLNESREGSGRSVFRAWEERNDRTRFVESDDDEELLFNIPFTGNVKLKGIVLIGEDSDTHPAELRLFKNVPHMSFDDTGREADQTFSLNIDVNGNLEYPTKIARFSNVSHLSIHISKNFGAENTKIYYIGLRGEWTEAHRHEVTICNYEAAANPADHKVSQITPQTNFIS.

The region spanning 18–190 (SDGPERGLEY…EVTICNYEAA (173 aa)) is the PITH domain.

The protein belongs to the PITHD1 family.

The protein localises to the cytoplasm. Functionally, may play a role in promoting megakaryocyte differentiation by up-regulating RUNX1 expression. This chain is PITH domain-containing protein 1 (pithd1), found in Xenopus laevis (African clawed frog).